Here is a 156-residue protein sequence, read N- to C-terminus: 6,7-dimethyl-8-ribityllumazine synthase (156 aa).

Residues Trp-22, 56 to 58 (AYE), and 80 to 82 (AVI) each bind 5-amino-6-(D-ribitylamino)uracil. Position 85-86 (85-86 (DT)) interacts with (2S)-2-hydroxy-3-oxobutyl phosphate. The active-site Proton donor is His-88. Phe-113 is a 5-amino-6-(D-ribitylamino)uracil binding site. Arg-127 contributes to the (2S)-2-hydroxy-3-oxobutyl phosphate binding site.

The protein belongs to the DMRL synthase family.

The enzyme catalyses (2S)-2-hydroxy-3-oxobutyl phosphate + 5-amino-6-(D-ribitylamino)uracil = 6,7-dimethyl-8-(1-D-ribityl)lumazine + phosphate + 2 H2O + H(+). It functions in the pathway cofactor biosynthesis; riboflavin biosynthesis; riboflavin from 2-hydroxy-3-oxobutyl phosphate and 5-amino-6-(D-ribitylamino)uracil: step 1/2. Functionally, catalyzes the formation of 6,7-dimethyl-8-ribityllumazine by condensation of 5-amino-6-(D-ribitylamino)uracil with 3,4-dihydroxy-2-butanone 4-phosphate. This is the penultimate step in the biosynthesis of riboflavin. The polypeptide is 6,7-dimethyl-8-ribityllumazine synthase (Deinococcus deserti (strain DSM 17065 / CIP 109153 / LMG 22923 / VCD115)).